A 332-amino-acid chain; its full sequence is L-lactate dehydrogenase A chain (332 aa).

Residues 29 to 57 and Arg-99 each bind NAD(+); that span reads GAVGMACAISILMKDLADELALVDVIEDK. 3 residues coordinate substrate: Arg-106, Asn-138, and Arg-169. Asn-138 serves as a coordination point for NAD(+). Catalysis depends on His-193, which acts as the Proton acceptor. Residue Thr-248 participates in substrate binding.

The protein belongs to the LDH/MDH superfamily. LDH family. Homotetramer.

The protein localises to the cytoplasm. It carries out the reaction (S)-lactate + NAD(+) = pyruvate + NADH + H(+). The protein operates within fermentation; pyruvate fermentation to lactate; (S)-lactate from pyruvate: step 1/1. Its function is as follows. Interconverts simultaneously and stereospecifically pyruvate and lactate with concomitant interconversion of NADH and NAD(+). This chain is L-lactate dehydrogenase A chain (LDHA), found in Sceloporus woodi (Florida scrub lizard).